A 77-amino-acid chain; its full sequence is Envelope glycoprotein (77 aa).

The Extracellular portion of the chain corresponds to 1–24 (LERQKNQNWYEGWFNSSPWFTTLL). A helical membrane pass occupies residues 25 to 45 (STIAGPLLLLLLLLILGPCII). C43 carries S-palmitoyl cysteine; by host lipidation. Residues 46-77 (NRLVQFINNRVSAVKILVLRQKYQTLDNEDNL) lie on the Cytoplasmic side of the membrane. The short motif at 68 to 71 (YQTL) is the YXXL motif; contains endocytosis signal element.

The mature envelope protein (Env) consists of a trimer of SU-TM heterodimers attached by noncovalent interactions or by a labile interchain disulfide bond. Post-translationally, specific enzymatic cleavages in vivo yield mature proteins. Envelope glycoproteins are synthesized as an inactive precursor that is N-glycosylated and processed likely by host cell furin or by a furin-like protease in the Golgi to yield the mature SU and TM proteins. The cleavage site between SU and TM requires the minimal sequence [KR]-X-[KR]-R. The R-peptide is released from the C-terminus of the cytoplasmic tail of the TM protein upon particle formation as a result of proteolytic cleavage by the viral protease. Cleavage of this peptide is required for TM to become fusogenic. In terms of processing, the transmembrane protein is palmitoylated. The R-peptide is palmitoylated.

It is found in the virion membrane. Its subcellular location is the host cell membrane. In terms of biological role, the surface protein (SU) attaches the virus to the host cell by binding to its receptor. This interaction triggers the refolding of the transmembrane protein (TM) and is thought to activate its fusogenic potential by unmasking its fusion peptide. Fusion occurs at the host cell plasma membrane. Functionally, the transmembrane protein (TM) acts as a class I viral fusion protein. Under the current model, the protein has at least 3 conformational states: pre-fusion native state, pre-hairpin intermediate state, and post-fusion hairpin state. During viral and target cell membrane fusion, the coiled coil regions (heptad repeats) assume a trimer-of-hairpins structure, positioning the fusion peptide in close proximity to the C-terminal region of the ectodomain. The formation of this structure appears to drive apposition and subsequent fusion of viral and target cell membranes. Membranes fusion leads to delivery of the nucleocapsid into the cytoplasm. The protein is Envelope glycoprotein (env) of Woolly monkey sarcoma virus (WMSV).